Consider the following 192-residue polypeptide: Adenylate kinase (192 aa).

Residue Gly-12–Thr-17 participates in ATP binding. Residues Ser-33–Val-62 form an NMP region. Residues Thr-34, Arg-39, Asn-60–Val-62, Gly-87–Arg-90, and Gln-94 contribute to the AMP site. The tract at residues Gly-129–Asp-135 is LID. Arg-130 provides a ligand contact to ATP. 2 residues coordinate AMP: Arg-132 and Arg-144. Arg-172 serves as a coordination point for ATP.

Belongs to the adenylate kinase family. Monomer.

The protein resides in the cytoplasm. The catalysed reaction is AMP + ATP = 2 ADP. It functions in the pathway purine metabolism; AMP biosynthesis via salvage pathway; AMP from ADP: step 1/1. Catalyzes the reversible transfer of the terminal phosphate group between ATP and AMP. Plays an important role in cellular energy homeostasis and in adenine nucleotide metabolism. This is Adenylate kinase from Campylobacter hominis (strain ATCC BAA-381 / DSM 21671 / CCUG 45161 / LMG 19568 / NCTC 13146 / CH001A).